Reading from the N-terminus, the 450-residue chain is tRNA-2-methylthio-N(6)-dimethylallyladenosine synthase (450 aa).

The 119-residue stretch at 14–132 (GEFFIETWGC…FPNYLNEVKK (119 aa)) folds into the MTTase N-terminal domain. Residues Cys23, Cys59, Cys93, Cys169, Cys173, and Cys176 each coordinate [4Fe-4S] cluster. Positions 155–385 (RKNSMKAFVT…VEVVNEISAK (231 aa)) constitute a Radical SAM core domain. Positions 388–450 (KAYEGKIEEV…NSFSLTGEEI (63 aa)) constitute a TRAM domain.

Belongs to the methylthiotransferase family. MiaB subfamily. As to quaternary structure, monomer. [4Fe-4S] cluster is required as a cofactor.

It localises to the cytoplasm. It carries out the reaction N(6)-dimethylallyladenosine(37) in tRNA + (sulfur carrier)-SH + AH2 + 2 S-adenosyl-L-methionine = 2-methylsulfanyl-N(6)-dimethylallyladenosine(37) in tRNA + (sulfur carrier)-H + 5'-deoxyadenosine + L-methionine + A + S-adenosyl-L-homocysteine + 2 H(+). In terms of biological role, catalyzes the methylthiolation of N6-(dimethylallyl)adenosine (i(6)A), leading to the formation of 2-methylthio-N6-(dimethylallyl)adenosine (ms(2)i(6)A) at position 37 in tRNAs that read codons beginning with uridine. The chain is tRNA-2-methylthio-N(6)-dimethylallyladenosine synthase from Clostridium botulinum (strain Langeland / NCTC 10281 / Type F).